The primary structure comprises 393 residues: MEQCACVERELDKVLHKFLTYGQHCEQSLEELLHSVGQLRAELASAALQGTPLSATLSLVMSQCCRKIRDTVQKLASDHKDIHSSVSRVGKAIDRNFDSEICGVVSDAVWDSREKQQQILQMAIVEHLYQQGMLSVAEELCQESTLNVDLDFKQPFLELNRILEALHEQDLGPALEWAVSHRQRLLELNSSLEFKLHRLHFIRLLAGGPEKQLEALSYARHFQPFARLHQREIQVMMGSLVYLRLGLEKSPYCHLLDNSHWAEICETFTRDACSLLGLSVESPLSVSFASGCVALPVLMNIKAVIEQRQCTGVWSHKDELPIEIELGMKCWYHSVFACPILRQQTSDSNPPIKLICGHVISRDALNKLINGGKLKCPYCPMEQNPADGKRIIF.

The residue at position 1 (Met1) is an N-acetylmethionine. One can recognise a LisH domain in the interval 116–148 (QQQILQMAIVEHLYQQGMLSVAEELCQESTLNV). One can recognise a CTLH domain in the interval 155 to 212 (PFLELNRILEALHEQDLGPALEWAVSHRQRLLELNSSLEFKLHRLHFIRLLAGGPEKQ). Residues 338 to 379 (CPILRQQTSDSNPPIKLICGHVISRDALNKLINGGKLKCPYC) form an RING-Gid-type zinc finger.

Identified in the CTLH complex that contains GID4, RANBP9 and/or RANBP10, MKLN1, MAEA, RMND5A (or alternatively its paralog RMND5B), GID8, ARMC8, WDR26 and YPEL5. Within this complex, MAEA, RMND5A (or alternatively its paralog RMND5B), GID8, WDR26, and RANBP9 and/or RANBP10 form the catalytic core, while GID4, MKLN1, ARMC8 and YPEL5 have ancillary roles.

The protein localises to the cytoplasm. It localises to the cytosol. The enzyme catalyses S-ubiquitinyl-[E2 ubiquitin-conjugating enzyme]-L-cysteine + [acceptor protein]-L-lysine = [E2 ubiquitin-conjugating enzyme]-L-cysteine + N(6)-ubiquitinyl-[acceptor protein]-L-lysine.. In terms of biological role, core component of the CTLH E3 ubiquitin-protein ligase complex that selectively accepts ubiquitin from UBE2H and mediates ubiquitination and subsequent proteasomal degradation of the transcription factor HBP1. MAEA and RMND5A are both required for catalytic activity of the CTLH E3 ubiquitin-protein ligase complex. Catalytic activity of the complex is required for normal cell proliferation. The CTLH E3 ubiquitin-protein ligase complex is not required for the degradation of enzymes involved in gluconeogenesis, such as FBP1. This is E3 ubiquitin-protein transferase RMND5B (Rmnd5b) from Mus musculus (Mouse).